The following is a 176-amino-acid chain: Imidazoleglycerol-phosphate dehydratase (176 aa).

It belongs to the imidazoleglycerol-phosphate dehydratase family.

The protein resides in the cytoplasm. The enzyme catalyses D-erythro-1-(imidazol-4-yl)glycerol 3-phosphate = 3-(imidazol-4-yl)-2-oxopropyl phosphate + H2O. It participates in amino-acid biosynthesis; L-histidine biosynthesis; L-histidine from 5-phospho-alpha-D-ribose 1-diphosphate: step 6/9. This chain is Imidazoleglycerol-phosphate dehydratase, found in Pyrococcus furiosus (strain ATCC 43587 / DSM 3638 / JCM 8422 / Vc1).